The chain runs to 594 residues: Segmentation polarity homeobox protein engrailed (594 aa).

Disordered stretches follow at residues 1–64, 76–127, 141–164, 198–217, 231–299, 387–458, and 474–501; these read MALE…TRDE, IKQE…PASI, KATA…ISPG, HYYQ…PQRA, ISKS…PTGS, AGTG…GSEN, and DRPS…RPRT. Over residues 22-60 the composition is skewed to low complexity; that stretch reads SQSPTSTTTVTMATASPVPACTTTTTTTSTSGASAASSP. Over residues 92 to 112 the composition is skewed to basic residues; it reads PHHHQHPHHHQLPHHPHHQHH. Residues 151 to 164 are compositionally biased toward pro residues; that stretch reads HPQPPAIREPISPG. Polar residues predominate over residues 237–247; the sequence is LCSSNGSSSAT. 2 stretches are compositionally biased toward low complexity: residues 278 to 299 and 387 to 402; these read ASPS…PTGS and AGTG…ANGA. Composition is skewed to polar residues over residues 426–436 and 448–458; these read SSETNGSSSQD and ETSSTKDGSEN. Residues 487 to 499 are compositionally biased toward basic and acidic residues; that stretch reads QPKEKGDSEEKRP. The segment at residues 496–555 is a DNA-binding region (homeobox); it reads EKRPRTAFSNAQLQRLKNEFNENRYLTEKRRQTLSAELGLNEAQIKIWFQNKRAKIKKSS.

Belongs to the engrailed homeobox family.

The protein resides in the nucleus. In terms of biological role, this protein specifies the body segmentation pattern. It is required for the development of the central nervous system. Transcriptional regulator that repress activated promoters. In Anopheles gambiae (African malaria mosquito), this protein is Segmentation polarity homeobox protein engrailed (en).